The chain runs to 138 residues: uncharacterized protein (138 aa).

2 helical membrane-spanning segments follow: residues 1-21 (MEIGYIFILAGFLVIALEAIV) and 46-66 (YAFISAIIAGVLTIIILHKFV).

The protein resides in the cell membrane. This is an uncharacterized protein from Methanocaldococcus jannaschii (strain ATCC 43067 / DSM 2661 / JAL-1 / JCM 10045 / NBRC 100440) (Methanococcus jannaschii).